Reading from the N-terminus, the 114-residue chain is uncharacterized protein (114 aa).

To M.kandleri MK0008.

This is an uncharacterized protein from Methanocaldococcus jannaschii (strain ATCC 43067 / DSM 2661 / JAL-1 / JCM 10045 / NBRC 100440) (Methanococcus jannaschii).